The primary structure comprises 545 residues: ATP synthase subunit alpha (545 aa).

Residue 172 to 179 participates in ATP binding; the sequence is GDRKTGKT.

It belongs to the ATPase alpha/beta chains family. As to quaternary structure, F-type ATPases have 2 components, CF(1) - the catalytic core - and CF(0) - the membrane proton channel. CF(1) has five subunits: alpha(3), beta(3), gamma(1), delta(1), epsilon(1). CF(0) has three main subunits: a(1), b(2) and c(9-12). The alpha and beta chains form an alternating ring which encloses part of the gamma chain. CF(1) is attached to CF(0) by a central stalk formed by the gamma and epsilon chains, while a peripheral stalk is formed by the delta and b chains.

It is found in the cell membrane. It catalyses the reaction ATP + H2O + 4 H(+)(in) = ADP + phosphate + 5 H(+)(out). Its function is as follows. Produces ATP from ADP in the presence of a proton gradient across the membrane. The alpha chain is a regulatory subunit. The protein is ATP synthase subunit alpha of Nocardia farcinica (strain IFM 10152).